We begin with the raw amino-acid sequence, 271 residues long: NAD kinase (271 aa).

Residue aspartate 52 is the Proton acceptor of the active site. Residues 52-53 (DG), 129-130 (NE), arginine 155, aspartate 157, and alanine 192 each bind NAD(+).

Belongs to the NAD kinase family. It depends on a divalent metal cation as a cofactor.

The protein localises to the cytoplasm. It carries out the reaction NAD(+) + ATP = ADP + NADP(+) + H(+). Functionally, involved in the regulation of the intracellular balance of NAD and NADP, and is a key enzyme in the biosynthesis of NADP. Catalyzes specifically the phosphorylation on 2'-hydroxyl of the adenosine moiety of NAD to yield NADP. The protein is NAD kinase of Geobacillus stearothermophilus (Bacillus stearothermophilus).